Reading from the N-terminus, the 380-residue chain is Cytochrome b (380 aa).

4 consecutive transmembrane segments (helical) span residues 34–54 (FGSLLGICLLTQILTGLLLAA), 78–99 (WLLRNLHANGASFFFICIYLHI), 114–134 (WNTGVVLLLTLMATAFVGYVL), and 179–199 (FFALHFLLPFMIAGLTLIHLT). Residues His-84 and His-98 each contribute to the heme b site. Heme b is bound by residues His-183 and His-197. His-202 contributes to the a ubiquinone binding site. Transmembrane regions (helical) follow at residues 227-247 (LKDILGFMIMLLLLTTLALFH), 289-309 (LGGVLALAASVLILFLIPFLH), 321-341 (LSQLLFWLLVSNLFILTWIGS), and 348-368 (FIIIGQLASTTYFTIILVLFP).

This sequence belongs to the cytochrome b family. As to quaternary structure, the cytochrome bc1 complex contains 11 subunits: 3 respiratory subunits (MT-CYB, CYC1 and UQCRFS1), 2 core proteins (UQCRC1 and UQCRC2) and 6 low-molecular weight proteins (UQCRH/QCR6, UQCRB/QCR7, UQCRQ/QCR8, UQCR10/QCR9, UQCR11/QCR10 and a cleavage product of UQCRFS1). This cytochrome bc1 complex then forms a dimer. Requires heme b as cofactor.

It localises to the mitochondrion inner membrane. Its function is as follows. Component of the ubiquinol-cytochrome c reductase complex (complex III or cytochrome b-c1 complex) that is part of the mitochondrial respiratory chain. The b-c1 complex mediates electron transfer from ubiquinol to cytochrome c. Contributes to the generation of a proton gradient across the mitochondrial membrane that is then used for ATP synthesis. This Trogon curucui (Blue-crowned trogon) protein is Cytochrome b (MT-CYB).